Reading from the N-terminus, the 60-residue chain is Large ribosomal subunit protein uL30 (60 aa).

It belongs to the universal ribosomal protein uL30 family. Part of the 50S ribosomal subunit.

The sequence is that of Large ribosomal subunit protein uL30 from Bacillus cereus (strain G9842).